A 143-amino-acid polypeptide reads, in one-letter code: Fluoride-specific ion channel FluC (143 aa).

4 consecutive transmembrane segments (helical) span residues 3–23 (AVVW…GSGL), 41–61 (WGTL…LIWL), 76–96 (IVGL…CLVF), and 103–123 (LMVG…VFLG). Na(+)-binding residues include glycine 81 and threonine 84.

The protein belongs to the fluoride channel Fluc/FEX (TC 1.A.43) family.

It is found in the cell inner membrane. The catalysed reaction is fluoride(in) = fluoride(out). Na(+) is not transported, but it plays an essential structural role and its presence is essential for fluoride channel function. Functionally, fluoride-specific ion channel. Important for reducing fluoride concentration in the cell, thus reducing its toxicity. In Xylella fastidiosa (strain 9a5c), this protein is Fluoride-specific ion channel FluC.